A 177-amino-acid polypeptide reads, in one-letter code: Large ribosomal subunit protein uL6 (177 aa).

The protein belongs to the universal ribosomal protein uL6 family. In terms of assembly, part of the 50S ribosomal subunit.

Its function is as follows. This protein binds to the 23S rRNA, and is important in its secondary structure. It is located near the subunit interface in the base of the L7/L12 stalk, and near the tRNA binding site of the peptidyltransferase center. In Methylibium petroleiphilum (strain ATCC BAA-1232 / LMG 22953 / PM1), this protein is Large ribosomal subunit protein uL6.